A 488-amino-acid polypeptide reads, in one-letter code: 3-octaprenyl-4-hydroxybenzoate carboxy-lyase (488 aa).

Position 172 (Asn-172) interacts with Mn(2+). Prenylated FMN-binding positions include 175 to 177, 189 to 191, and 194 to 195; these read IYR, RWL, and RG. Residue Glu-238 coordinates Mn(2+). The Proton donor role is filled by Asp-287.

Belongs to the UbiD family. Homohexamer. Prenylated FMN is required as a cofactor. The cofactor is Mn(2+).

Its subcellular location is the cell membrane. It catalyses the reaction a 4-hydroxy-3-(all-trans-polyprenyl)benzoate + H(+) = a 2-(all-trans-polyprenyl)phenol + CO2. It participates in cofactor biosynthesis; ubiquinone biosynthesis. Its function is as follows. Catalyzes the decarboxylation of 3-octaprenyl-4-hydroxy benzoate to 2-octaprenylphenol, an intermediate step in ubiquinone biosynthesis. The protein is 3-octaprenyl-4-hydroxybenzoate carboxy-lyase of Pseudomonas putida (strain ATCC 47054 / DSM 6125 / CFBP 8728 / NCIMB 11950 / KT2440).